Consider the following 225-residue polypeptide: Transmembrane emp24 domain-containing protein p24delta11 (225 aa).

The N-terminal stretch at 1 to 35 (MDLLPSRYKIHKTKLRWILTMMTMMMMMVMRRGES) is a signal peptide. The Lumenal segment spans residues 36–193 (MRLDMESGNT…ELNRSTNSRM (158 aa)). Residues 45–160 (TKCISDDIKT…ITMLEVEVRK (116 aa)) enclose the GOLD domain. Positions 175–188 (LIEREREMQELNRS) form a coiled coil. Residue Arg-178 is modified to Omega-N-methylated arginine. The N-linked (GlcNAc...) asparagine glycan is linked to Asn-186. The chain crosses the membrane as a helical span at residues 194 to 210 (AALSLLSFVVTMSVAGL). The Cytoplasmic portion of the chain corresponds to 211 to 225 (QLRHLKSFLERKKLL). Positions 218–219 (FL) match the COPII vesicle coat-binding motif. Residues 218-225 (FLERKKLL) carry the COPI vesicle coat-binding motif.

This sequence belongs to the EMP24/GP25L family. Probably oligomerizes with other members of the EMP24/GP25L family. Associates with the COPI vesicle coat (coatomer). Associates with the COPII vesicle coat (coatomer).

The protein localises to the endoplasmic reticulum membrane. It is found in the golgi apparatus. The protein resides in the cis-Golgi network membrane. It localises to the golgi stack membrane. Functionally, involved in vesicular protein trafficking. Mainly functions in the early secretory pathway. Thought to act as cargo receptor at the lumenal side for incorporation of secretory cargo molecules into transport vesicles and to be involved in vesicle coat formation at the cytoplasmic side. This Arabidopsis thaliana (Mouse-ear cress) protein is Transmembrane emp24 domain-containing protein p24delta11.